The following is a 215-amino-acid chain: Oligoribonuclease (215 aa).

An Exonuclease domain is found at 5-170; that stretch reads LVWIDCEMTG…ADIHESIREL (166 aa). The active site involves Tyr-127. The segment at 196–215 is disordered; sequence LSDGAGAQEETDSAEAPQSG.

The protein belongs to the oligoribonuclease family.

It localises to the cytoplasm. In terms of biological role, 3'-to-5' exoribonuclease specific for small oligoribonucleotides. In Mycobacterium bovis (strain BCG / Pasteur 1173P2), this protein is Oligoribonuclease.